Reading from the N-terminus, the 528-residue chain is UDP-glucuronosyltransferase 2B10 (528 aa).

The first 23 residues, 1 to 23, serve as a signal peptide directing secretion; sequence MALKWTTVLLIQLSFYFSSGSCG. An N-linked (GlcNAc...) asparagine glycan is attached at Asn-66. Lys-134 is modified (N6-succinyllysine). N-linked (GlcNAc...) asparagine glycosylation is found at Asn-314 and Asn-481. Residues 492–512 form a helical membrane-spanning segment; that stretch reads VIGFLLACVATVLFIITKCCL.

It belongs to the UDP-glycosyltransferase family.

It is found in the microsome membrane. It localises to the endoplasmic reticulum membrane. The enzyme catalyses glucuronate acceptor + UDP-alpha-D-glucuronate = acceptor beta-D-glucuronoside + UDP + H(+). UDPGT is of major importance in the conjugation and subsequent elimination of potentially toxic xenobiotics and endogenous compounds. The chain is UDP-glucuronosyltransferase 2B10 (UGT2B10) from Homo sapiens (Human).